The following is an 831-amino-acid chain: Zinc phosphodiesterase ELAC protein 2 (831 aa).

A mitochondrion-targeting transit peptide spans 1-16; the sequence is MWALRSLLRPLGLRTM. 2 disordered regions span residues 15-47 and 179-227; these read TMSQGSARRPRPSKDPLRHLRTREKRGPGPGGP and SERR…ANRK. Polar residues predominate over residues 186–212; sequence QQPSQSPRTSPNRLSPKQSSDSGSAEN. Residues serine 191, serine 195, serine 200, serine 204, and serine 732 each carry the phosphoserine modification. The disordered stretch occupies residues 791–831; sequence LTQQADSPEDREPQQKRAHTDEPHSPQSKKESVANTLGARV. Phosphothreonine is present on threonine 792. Residues serine 797 and serine 815 each carry the phosphoserine modification. The span at 798-822 shows a compositional bias: basic and acidic residues; it reads PEDREPQQKRAHTDEPHSPQSKKES.

Belongs to the RNase Z family. Homodimer. Interacts with PTCD1. Zn(2+) serves as cofactor.

The protein localises to the mitochondrion. It localises to the mitochondrion matrix. Its subcellular location is the mitochondrion nucleoid. The protein resides in the nucleus. It carries out the reaction Endonucleolytic cleavage of RNA, removing extra 3' nucleotides from tRNA precursor, generating 3' termini of tRNAs. A 3'-hydroxy group is left at the tRNA terminus and a 5'-phosphoryl group is left at the trailer molecule.. Zinc phosphodiesterase, which displays mitochondrial tRNA 3'-processing endonuclease activity. Involved in tRNA maturation, by removing a 3'-trailer from precursor tRNA. Associates with mitochondrial DNA complexes at the nucleoids to initiate RNA processing and ribosome assembly. This is Zinc phosphodiesterase ELAC protein 2 (Elac2) from Mus musculus (Mouse).